A 264-amino-acid chain; its full sequence is E3 ubiquitin-protein ligase MARCHF8 (264 aa).

The disordered stretch occupies residues 15–47; that stretch reads LGHSVSRSSNISKAGSPTSVSAPSSFPRTSVTP. Positions 17-47 are enriched in polar residues; the sequence is HSVSRSSNISKAGSPTSVSAPSSFPRTSVTP. The RING-CH-type zinc finger occupies 45 to 106; the sequence is VTPSSQDICR…ELCKFEFIME (62 aa). Zn(2+) is bound by residues Cys-53, Cys-56, Cys-70, Cys-72, His-80, Cys-83, Cys-96, and Cys-99. 2 helical membrane passes run 130 to 150 and 170 to 190; these read CSVT…YVLI and FWTK…FMYV.

It localises to the cytoplasmic vesicle membrane. The protein localises to the lysosome membrane. The protein resides in the early endosome membrane. It catalyses the reaction S-ubiquitinyl-[E2 ubiquitin-conjugating enzyme]-L-cysteine + [acceptor protein]-L-lysine = [E2 ubiquitin-conjugating enzyme]-L-cysteine + N(6)-ubiquitinyl-[acceptor protein]-L-lysine.. It participates in protein modification; protein ubiquitination. Its function is as follows. E3 ubiquitin-protein ligase that mediates ubiquitination of cd86 and MHC class II proteins, such as hla-dr alpha and beta, and promotes their subsequent endocytosis and sorting to lysosomes via multivesicular bodies. This is E3 ubiquitin-protein ligase MARCHF8 (marchf8) from Xenopus tropicalis (Western clawed frog).